Here is a 137-residue protein sequence, read N- to C-terminus: Large ribosomal subunit protein uL16c (137 aa).

This sequence belongs to the universal ribosomal protein uL16 family. Part of the 50S ribosomal subunit.

The protein localises to the plastid. Its subcellular location is the chloroplast. This Rhodomonas salina (Cryptomonas salina) protein is Large ribosomal subunit protein uL16c.